A 620-amino-acid polypeptide reads, in one-letter code: Endoglucanase 21 (620 aa).

Positions 1-39 (MYGRDPWGGPLEINAADSMTDDDRSRNLQDLDRATPSRP) are disordered. Residues 1 to 70 (MYGRDPWGGP…DLGCILVSRK (70 aa)) lie on the Cytoplasmic side of the membrane. The span at 21–39 (DDDRSRNLQDLDRATPSRP) shows a compositional bias: basic and acidic residues. Residues 71 to 91 (IFLWTLGTIVVTALLSGFITL) form a helical; Signal-anchor for type II membrane protein membrane-spanning segment. Topologically, residues 92-620 (IVKTLPHHHH…TPPPPAPWTP (529 aa)) are extracellular. 2 N-linked (GlcNAc...) asparagine glycosylation sites follow: Asn108 and Asn134. Asp166 functions as the Nucleophile in the catalytic mechanism. N-linked (GlcNAc...) asparagine glycans are attached at residues Asn217, Asn325, Asn346, Asn409, Asn426, and Asn482. Residues His514 and Asp561 contribute to the active site. Asn567 is a glycosylation site (N-linked (GlcNAc...) asparagine). Glu570 is an active-site residue.

This sequence belongs to the glycosyl hydrolase 9 (cellulase E) family. Expressed in conductive tissues of young roots, cotyledons, rosette leaves, cauline leaves and sepals. Expressed in the leaf trichome support cells.

The protein resides in the cell membrane. The catalysed reaction is Endohydrolysis of (1-&gt;4)-beta-D-glucosidic linkages in cellulose, lichenin and cereal beta-D-glucans.. The sequence is that of Endoglucanase 21 (KOR3) from Arabidopsis thaliana (Mouse-ear cress).